A 120-amino-acid polypeptide reads, in one-letter code: Small ribosomal subunit protein uS12 (120 aa).

Asp88 is modified (3-methylthioaspartic acid).

This sequence belongs to the universal ribosomal protein uS12 family. In terms of assembly, part of the 30S ribosomal subunit. Contacts proteins S8 and S17. May interact with IF1 in the 30S initiation complex.

With S4 and S5 plays an important role in translational accuracy. Functionally, interacts with and stabilizes bases of the 16S rRNA that are involved in tRNA selection in the A site and with the mRNA backbone. Located at the interface of the 30S and 50S subunits, it traverses the body of the 30S subunit contacting proteins on the other side and probably holding the rRNA structure together. The combined cluster of proteins S8, S12 and S17 appears to hold together the shoulder and platform of the 30S subunit. This chain is Small ribosomal subunit protein uS12, found in Carsonella ruddii (strain PV).